Consider the following 306-residue polypeptide: Homoserine kinase (306 aa).

95–105 (PQSRGLGSSAA) serves as a coordination point for ATP.

This sequence belongs to the GHMP kinase family. Homoserine kinase subfamily.

It localises to the cytoplasm. It carries out the reaction L-homoserine + ATP = O-phospho-L-homoserine + ADP + H(+). It participates in amino-acid biosynthesis; L-threonine biosynthesis; L-threonine from L-aspartate: step 4/5. In terms of biological role, catalyzes the ATP-dependent phosphorylation of L-homoserine to L-homoserine phosphate. In Corynebacterium urealyticum (strain ATCC 43042 / DSM 7109), this protein is Homoserine kinase.